The chain runs to 202 residues: Large ribosomal subunit protein uL13 (202 aa).

Belongs to the universal ribosomal protein uL13 family. Component of the large ribosomal subunit (LSU). Mature N.crassa ribosomes consist of a small (40S) and a large (60S) subunit. The 40S small subunit contains 1 molecule of ribosomal RNA (18S rRNA) and at least 32 different proteins. The large 60S subunit contains 3 rRNA molecules (26S, 5.8S and 5S rRNA) and at least 42 different proteins.

It localises to the cytoplasm. In terms of biological role, component of the ribosome, a large ribonucleoprotein complex responsible for the synthesis of proteins in the cell. The small ribosomal subunit (SSU) binds messenger RNAs (mRNAs) and translates the encoded message by selecting cognate aminoacyl-transfer RNA (tRNA) molecules. The large subunit (LSU) contains the ribosomal catalytic site termed the peptidyl transferase center (PTC), which catalyzes the formation of peptide bonds, thereby polymerizing the amino acids delivered by tRNAs into a polypeptide chain. The nascent polypeptides leave the ribosome through a tunnel in the LSU and interact with protein factors that function in enzymatic processing, targeting, and the membrane insertion of nascent chains at the exit of the ribosomal tunnel. The sequence is that of Large ribosomal subunit protein uL13 (crp-46) from Neurospora crassa (strain ATCC 24698 / 74-OR23-1A / CBS 708.71 / DSM 1257 / FGSC 987).